Consider the following 732-residue polypeptide: uncharacterized protein (732 aa).

2 consecutive transmembrane segments (helical) span residues 687–707 (YLFPVVGVAALLLIGNMGSDL) and 712–732 (GVKVATALSAMLLAIFAYYTS).

The protein belongs to the FadG family.

It is found in the cell membrane. This is an uncharacterized protein from Bacillus subtilis (strain 168).